Here is an 818-residue protein sequence, read N- to C-terminus: Phosphoenolpyruvate synthase (818 aa).

H442 acts as the Tele-phosphohistidine intermediate in catalysis. Substrate is bound by residues R532, R601, E703, G724, S725, N726, and D727. A Mg(2+)-binding site is contributed by E703. D727 is a binding site for Mg(2+). Residue C774 is the Proton donor of the active site.

The protein belongs to the PEP-utilizing enzyme family. Requires Mg(2+) as cofactor.

It carries out the reaction pyruvate + ATP + H2O = phosphoenolpyruvate + AMP + phosphate + 2 H(+). The protein operates within carbohydrate biosynthesis; gluconeogenesis. In terms of biological role, catalyzes the phosphorylation of pyruvate to phosphoenolpyruvate. This chain is Phosphoenolpyruvate synthase (ppsA), found in Synechocystis sp. (strain ATCC 27184 / PCC 6803 / Kazusa).